The following is a 253-amino-acid chain: MEVYLDATECYLKNSLCFYPSLNIFVSWSVLVGAHVGYIVLVIILRKWMQRRAALNMNKIMMIYNVTQIYISAIMAISLAPHLKKGLFNLNGRFSANIEFWIFVHYCSKFLDMFDTVLMIFRKKNEQLSFLHIYHHATIGFIWGLLLRNGIGNGTAFFGAWVNSAVHFLMYSHYLWTSLGFRNPLKSILTKIQMFQFFLCIVQASLAPFFDNQFALQWSFLQLTYHITLFILFLDFHRKSGKKKGLRNLKQTE.

7 helical membrane passes run 24-44 (IFVSWSVLVGAHVGYIVLVII), 60-80 (IMMIYNVTQIYISAIMAISLA), 100-120 (FWIFVHYCSKFLDMFDTVLMI), 127-147 (QLSFLHIYHHATIGFIWGLLL), 150-170 (GIGNGTAFFGAWVNSAVHFLM), 188-208 (ILTKIQMFQFFLCIVQASLAP), and 214-234 (FALQWSFLQLTYHITLFILFL). Residues 132-136 (HIYHH) carry the HxxHH motif motif. H135 functions as the Nucleophile in the catalytic mechanism.

This sequence belongs to the ELO family.

The protein resides in the membrane. The enzyme catalyses an acyl-CoA + malonyl-CoA + H(+) = a 3-oxoacyl-CoA + CO2 + CoA. It functions in the pathway lipid metabolism; polyunsaturated fatty acid biosynthesis. Involved in the synthesis of fatty acids. Elongates C20 polyunsaturated fatty acids (PUFAs) with a preference for n-6 PUFAs. This is Fatty acid elongase 5 from Trypanosoma cruzi (strain CL Brener).